A 1355-amino-acid polypeptide reads, in one-letter code: Ecdysone-induced protein 75B, isoform A (1355 aa).

Disordered stretches follow at residues 60-91, 126-228, 248-268, and 308-344; these read QHQP…QQHS, RLKN…DSSY, ELEQ…EAKP, and ATQQ…NSSA. The segment covering 66-76 has biased composition (basic residues); the sequence is QLHHQHQHQHQ. Composition is skewed to low complexity over residues 77 to 91 and 143 to 179; these read HQQQ…QQHS and TLVK…QHQQ. Acidic residues predominate over residues 200–213; the sequence is SGIDEDSPNSDEDC. Polar residues-rich tracts occupy residues 218–228 and 254–264; these read PAGTSLEDSSY and TTGGSNAQQQV. Composition is skewed to low complexity over residues 308-321 and 330-344; these read ATQQ…QHQH and DSNC…NSSA. The nuclear receptor DNA-binding region spans 384-474; it reads SQLNYLCQKF…VGMSRDAVRF (91 aa). Residues 387-421 form an NR C4-type; degenerate zinc finger; sequence NYLCQKFDEKLDTALSNSSANTGRNTPAVTANEDA. The NR C4-type zinc-finger motif lies at 438–457; sequence CTKNQQCSILRINRNRCQYC. One can recognise an NR LBD domain in the interval 508–756; that stretch reads DQPRLLAAVL…QQMWSMEDGN (249 aa). 6 disordered regions span residues 780 to 821, 927 to 964, 987 to 1007, 1051 to 1117, 1147 to 1260, and 1312 to 1344; these read KSPL…SALA, LDSP…SVDD, VSVS…KRQI, AEAD…SSHS, ENST…SNSA, and TVTA…NPGL. Low complexity-rich tracts occupy residues 797-809, 948-960, 987-1001, 1053-1098, and 1106-1117; these read GSPS…GVSL, SSGG…SPRS, VSVS…STSS, ADAS…AQSQ, and SSPKASMASSHS. Polar residues-rich tracts occupy residues 1149–1162 and 1174–1196; these read STAA…VGNR and AVQN…QRQQ. 3 stretches are compositionally biased toward low complexity: residues 1197-1233, 1242-1260, and 1315-1343; these read SVSP…SASS, STSN…SNSA, and ASNG…PNPG.

Belongs to the nuclear hormone receptor family. NR1 subfamily.

It is found in the nucleus. Implicated in the regulation of ecdysone-triggered gene hierarchies. Probably plays a key role in mediating the regulation of the larval molt by 20-OH-ecdysone. The polypeptide is Ecdysone-induced protein 75B, isoform A (Eip75B) (Drosophila melanogaster (Fruit fly)).